The chain runs to 176 residues: ATP-dependent protease subunit HslV (176 aa).

Residue Thr-5 is part of the active site. 3 residues coordinate Na(+): Ala-161, Cys-164, and Thr-167.

The protein belongs to the peptidase T1B family. HslV subfamily. A double ring-shaped homohexamer of HslV is capped on each side by a ring-shaped HslU homohexamer. The assembly of the HslU/HslV complex is dependent on binding of ATP.

The protein localises to the cytoplasm. The catalysed reaction is ATP-dependent cleavage of peptide bonds with broad specificity.. With respect to regulation, allosterically activated by HslU binding. Functionally, protease subunit of a proteasome-like degradation complex believed to be a general protein degrading machinery. This is ATP-dependent protease subunit HslV from Desulforamulus reducens (strain ATCC BAA-1160 / DSM 100696 / MI-1) (Desulfotomaculum reducens).